Reading from the N-terminus, the 278-residue chain is Pre-hexon-linking protein VIII (278 aa).

The propeptide occupies 114-199; sequence SPSLLSGGAS…ILRYRRLGQQ (86 aa).

Belongs to the adenoviridae hexon-linking protein family. Interacts with the peripentonal hexons as well as the hexons in the facets. Part of a complex composed of the core-capsid bridging protein, the endosome lysis protein VI and the hexon-linking protein VIII; these interactions bridge the virus core to the capsid. Cleaved by the viral protease during virion maturation. May cause the middle segment to be shed from the capsid.

It localises to the virion. The protein localises to the host nucleus. Functionally, structural component of the virion that acts as a cement protein on the capsid interior and which glue the peripentonal hexons and group-of-nine hexons together. The chain is Pre-hexon-linking protein VIII from Pantherophis guttatus (Corn snake).